Consider the following 151-residue polypeptide: Large ribosomal subunit protein uL13 (151 aa).

The protein belongs to the universal ribosomal protein uL13 family. Part of the 50S ribosomal subunit.

Its function is as follows. This protein is one of the early assembly proteins of the 50S ribosomal subunit, although it is not seen to bind rRNA by itself. It is important during the early stages of 50S assembly. In Picosynechococcus sp. (strain ATCC 27264 / PCC 7002 / PR-6) (Agmenellum quadruplicatum), this protein is Large ribosomal subunit protein uL13.